The sequence spans 362 residues: Glutamine synthetase (362 aa).

The GS beta-grasp domain maps to 26 to 107 (LIAEYIWIDS…VLSECWNADG (82 aa)). One can recognise a GS catalytic domain in the interval 114–362 (HRHEAAKLME…METCFGAVSE (249 aa)).

The protein belongs to the glutamine synthetase family. In terms of assembly, homooctamer.

It is found in the cytoplasm. It carries out the reaction L-glutamate + NH4(+) + ATP = L-glutamine + ADP + phosphate + H(+). In Neurospora crassa (strain ATCC 24698 / 74-OR23-1A / CBS 708.71 / DSM 1257 / FGSC 987), this protein is Glutamine synthetase (gln-1).